Reading from the N-terminus, the 146-residue chain is Protein US8.5 (146 aa).

The disordered stretch occupies residues 63-93; sequence LIAIADARGDPPETLPPGAGGAAPACRRPPR. Over residues 84-93 the composition is skewed to low complexity; the sequence is AAPACRRPPR.

It belongs to the HHV-1 US8.5 protein family. In terms of processing, phosphorylated.

Its subcellular location is the host nucleus. It is found in the host nucleolus. This chain is Protein US8.5, found in Human herpesvirus 2 (strain HG52) (HHV-2).